A 907-amino-acid chain; its full sequence is Protein translocase subunit SecA (907 aa).

ATP contacts are provided by residues Gln87, 105-109 (GEGKT), and Asp510. Zn(2+)-binding residues include Cys892, Cys894, Cys903, and His904.

This sequence belongs to the SecA family. As to quaternary structure, monomer and homodimer. Part of the essential Sec protein translocation apparatus which comprises SecA, SecYEG and auxiliary proteins SecDF-YajC and YidC. It depends on Zn(2+) as a cofactor.

The protein localises to the cell inner membrane. The protein resides in the cytoplasm. It carries out the reaction ATP + H2O + cellular proteinSide 1 = ADP + phosphate + cellular proteinSide 2.. Functionally, part of the Sec protein translocase complex. Interacts with the SecYEG preprotein conducting channel. Has a central role in coupling the hydrolysis of ATP to the transfer of proteins into and across the cell membrane, serving both as a receptor for the preprotein-SecB complex and as an ATP-driven molecular motor driving the stepwise translocation of polypeptide chains across the membrane. In Acinetobacter baumannii (strain ATCC 17978 / DSM 105126 / CIP 53.77 / LMG 1025 / NCDC KC755 / 5377), this protein is Protein translocase subunit SecA.